The primary structure comprises 212 residues: Prolactin (212 aa).

Residues 1–26 (MARCCKCPRLHLAVTVLACVLVFTEG) form the signal peptide. 2 disulfides stabilise this stretch: C71–C185 and C202–C212.

The protein belongs to the somatotropin/prolactin family. Pituitary gland.

Its subcellular location is the secreted. The chain is Prolactin (prl) from Ictalurus punctatus (Channel catfish).